Here is an 843-residue protein sequence, read N- to C-terminus: Speckle targeted PIP5K1A-regulated poly(A) polymerase (843 aa).

The Matrin-type zinc finger occupies 25–55 (FRCLLCGVNIPNRPSLTDHLSGRRHVRLHEE). Residues 54-126 (EERDKRNQQQ…ALEEPQIKLS (73 aa)) enclose the RRM domain. Residues 134-146 (PREKKEFQRKKGG) are compositionally biased toward basic residues. The disordered stretch occupies residues 134-157 (PREKKEFQRKKGGSPRTLQPPDPE). Serine 215 contributes to the ATP binding site. Positions 226 and 228 each coordinate Mg(2+). UTP-binding residues include aspartate 226 and aspartate 228. Basic and acidic residues predominate over residues 241-255 (VEGKAEKEIQNREES). Residues 241-292 (VEGKAEKEIQNREESSTDMEVSMEDPETERKEEEMEIGNSKNDEDEDVTPGL) are disordered. ATP is bound at residue asparagine 354. UTP contacts are provided by asparagine 354, arginine 376, tyrosine 398, and histidine 516. The PAP-associated domain occupies 456 to 516 (SLSSLLSEFF…NIQDPFELSH (61 aa)). Residues 564 to 837 (PPTERECVGR…YLPRMVAQIQ (274 aa)) form a KA1; binds the bulging loops of U6 snRNA but is dispensable for terminal uridylyltransferase activity region. The disordered stretch occupies residues 653-691 (QNNTKEASKQKSIFKTEEGMTESARRKREMTEPCMSDMT). Basic and acidic residues predominate over residues 658–670 (EASKQKSIFKTEE).

Belongs to the DNA polymerase type-B-like family. As to quaternary structure, associates with the cleavage and polyadenylation specificity factor (CPSF) complex. Mg(2+) serves as cofactor. The cofactor is Mn(2+).

The protein localises to the nucleus. Its subcellular location is the nucleolus. It localises to the nucleus speckle. It carries out the reaction RNA(n) + UTP = RNA(n)-3'-uridine ribonucleotide + diphosphate. The enzyme catalyses RNA(n) + ATP = RNA(n)-3'-adenine ribonucleotide + diphosphate. Functionally, poly(A) polymerase that creates the 3'-poly(A) tail of specific pre-mRNAs. In addition to polyadenylation, it is also required for the 3'-end cleavage of pre-mRNAs: binds to the 3'UTR of targeted pre-mRNAs and promotes the recruitment and assembly of the CPSF complex on the 3'UTR of pre-mRNAs. In addition to adenylyltransferase activity, also has uridylyltransferase activity. However, the ATP ratio is higher than UTP in cells, suggesting that it functions primarily as a poly(A) polymerase. The polypeptide is Speckle targeted PIP5K1A-regulated poly(A) polymerase (tut1) (Xenopus tropicalis (Western clawed frog)).